Consider the following 292-residue polypeptide: MAASTMSIRSSAYSDSWQVDDCPESCCEPPCCATSCCAPAPCLTLVCTPVSRVSSPCCQVTCEPSPCQSGCTSSCTPSCCQQSSCQPAYCTSSPCQQACCVPVCCKPVCCVPVCCGASSCCQQSSYQPACCASSSCQPACCVPVCCKPVCCAPTCSEDSYSCCQQSSCQPACCTSSPCQQSYCVPVCCKPVCCKPICCVPVCSGASSLCCQQSGCQPACCTTSCCRPSSSVSLLCRPVCRPACCVPVSSCCAPTSSRQPSYCRQASCVSLLCRPVCSRPACYSFSSGQKSSC.

25 tandem repeats follow at residues 26 to 30, 31 to 35, 36 to 40, 57 to 61, 79 to 83, 99 to 103, 104 to 108, 109 to 113, 114 to 118, 120 to 124, 130 to 134, 140 to 144, 145 to 149, 150 to 154, 162 to 166, 172 to 176, 182 to 186, 187 to 191, 192 to 196, 197 to 201, 209 to 213, 219 to 223, 224 to 228, 243 to 247, and 250 to 254. Positions 26-254 are 25 X 5 AA repeats of C-C-X(3); that stretch reads CCEPPCCATS…VPVSSCCAPT (229 aa).

Belongs to the KRTAP type 10 family. In terms of assembly, interacts with hair keratins. As to expression, restricted to a narrow region of the hair fiber cuticle, lying approximately 20 cell layers above the apex of the dermal papilla of the hair root; not detected in any other tissues.

Its function is as follows. In the hair cortex, hair keratin intermediate filaments are embedded in an interfilamentous matrix, consisting of hair keratin-associated proteins (KRTAP), which are essential for the formation of a rigid and resistant hair shaft through their extensive disulfide bond cross-linking with abundant cysteine residues of hair keratins. The matrix proteins include the high-sulfur and high-glycine-tyrosine keratins. In Homo sapiens (Human), this protein is Keratin-associated protein 10-9 (KRTAP10-9).